Consider the following 918-residue polypeptide: MTNYSLRARMMILILAPTVLIGLLLSIFFVVHRYNDLQRQLEDAGASIIEPLAVSTEYGMSLQNRESIGQLISVLHRRHSDIVRAISVYDENNRLFVTSNFHLDPSSMQLGSNVPFPRQLTVTRDGDIMILRTPIISESYSPDESPSSDAKNSQNMLGYIALELDLKSVRLQQYKEIFISCVMMLFCIGIALIFGWRLMRDVTGPIRNMVNTVDRIRRGQLDSRVEGFMLGELDMLKNGINSMAMSLAAYHEEMQHNIDQATSDLRETLEQMEIQNVELDLAKKRAQEAARIKSEFLANMSHELRTPLNGVIGFTRLTLKTELTPTQRDHLNTIERSANNLLAIINDVLDFSKLEAGKLILESIPFPLRSTLDEVVTLLAHSSHDKGLELTLNIKSDVPDNVIGDPLRLQQIITNLVGNAIKFTENGNIDILVEKRALSNTKVQIEVQIRDTGIGIPERDQSRLFQAFRQADASISRRHGGTGLGLVITQKLVNEMGGDISFHSQPNRGSTFWFHINLDLNPNIIIEGPSIQCLAGKRLAYVEPNSAAAQCTLDILSETPLEVVYSPTFSALPPAHYDMMLLGIAVTFREPLTMQHERLAKAVSMTDFLMLALPCHAQVNAEKLKQDGIGACLLKPLTPTRLLPALTEFCHHKQNTLLPVTDESKLAMTVMAVDDNPANLKLIGALLEDMVQHVELCDSGHQAVERAKQMPFDLILMDIQMPDMDGIRACELIHQLPHQRQTPVIAVTAHAMAGQKEKLLGAGMSDYLAKPIEEERLHNLLLRYKPGSGISSRVVTPEVNEIVVNPNATLDWQLALRQAAGKTDLARDMLQMLLDFLPEVRNKVEEQLAGENPEGLVDLIHKLHGSCGYSGVPRMKNLCQLIEQQLRSGTKEEDLEPELLELLDEMDNVAREASKILG.

Over 1-10 the chain is Cytoplasmic; it reads MTNYSLRARM. Residues 11 to 31 traverse the membrane as a helical segment; sequence MILILAPTVLIGLLLSIFFVV. The Periplasmic portion of the chain corresponds to 32-175; that stretch reads HRYNDLQRQL…LKSVRLQQYK (144 aa). The chain crosses the membrane as a helical span at residues 176 to 196; the sequence is EIFISCVMMLFCIGIALIFGW. The Cytoplasmic portion of the chain corresponds to 197 to 918; sequence RLMRDVTGPI…VAREASKILG (722 aa). One can recognise an HAMP domain in the interval 200–252; sequence RDVTGPIRNMVNTVDRIRRGQLDSRVEGFMLGELDMLKNGINSMAMSLAAYHE. Positions 299–520 constitute a Histidine kinase domain; sequence NMSHELRTPL…TFWFHINLDL (222 aa). Phosphohistidine; by autocatalysis is present on His-302. The Response regulatory domain maps to 669 to 785; the sequence is TVMAVDDNPA…RLHNLLLRYK (117 aa). Asp-718 is subject to 4-aspartylphosphate. The 97-residue stretch at 822 to 918 folds into the HPt domain; that stretch reads KTDLARDMLQ…VAREASKILG (97 aa). Residue His-861 is modified to Phosphohistidine.

Post-translationally, activation requires a sequential transfer of a phosphate group from a His in the primary transmitter domain, to an Asp in the receiver domain and to a His in the secondary transmitter domain.

It is found in the cell inner membrane. It catalyses the reaction ATP + protein L-histidine = ADP + protein N-phospho-L-histidine.. In terms of biological role, member of the two-component regulatory system UvrY/BarA involved in the regulation of carbon metabolism via the CsrA/CsrB regulatory system. Phosphorylates UvrY, probably via a four-step phosphorelay. This is Signal transduction histidine-protein kinase BarA (barA) from Shigella flexneri.